The sequence spans 87 residues: Large ribosomal subunit protein bL27 (87 aa).

Residues 1-26 (MAHKKGTGSTRNGRDSNSKRLGVKAY) form a disordered region.

The protein belongs to the bacterial ribosomal protein bL27 family.

The polypeptide is Large ribosomal subunit protein bL27 (Prochlorococcus marinus (strain SARG / CCMP1375 / SS120)).